The primary structure comprises 400 residues: Tyrosine--tRNA ligase 2 (400 aa).

The short motif at 46 to 55 is the 'HIGH' region element; sequence PSAPDIHLGH. Residues 230–234 carry the 'KMSKS' region motif; that stretch reads KMSKS. Position 233 (Lys-233) interacts with ATP. The region spanning 339–399 is the S4 RNA-binding domain; the sequence is NNLIEAIVKI…GKKKIVKLLV (61 aa).

Belongs to the class-I aminoacyl-tRNA synthetase family. TyrS type 2 subfamily. As to quaternary structure, homodimer.

The protein resides in the cytoplasm. The catalysed reaction is tRNA(Tyr) + L-tyrosine + ATP = L-tyrosyl-tRNA(Tyr) + AMP + diphosphate + H(+). In terms of biological role, catalyzes the attachment of tyrosine to tRNA(Tyr) in a two-step reaction: tyrosine is first activated by ATP to form Tyr-AMP and then transferred to the acceptor end of tRNA(Tyr). The chain is Tyrosine--tRNA ligase 2 from Clostridium acetobutylicum (strain ATCC 824 / DSM 792 / JCM 1419 / IAM 19013 / LMG 5710 / NBRC 13948 / NRRL B-527 / VKM B-1787 / 2291 / W).